A 360-amino-acid polypeptide reads, in one-letter code: Phospho-N-acetylmuramoyl-pentapeptide-transferase (360 aa).

10 helical membrane passes run 27 to 47 (GAMI…INSL), 71 to 91 (TPTM…LLWA), 93 to 113 (LASV…AIGF), 128 to 148 (FSGK…AFVI), 168 to 188 (FVVN…VGAG), 199 to 219 (GLAI…AYLS), 239 to 259 (LAVV…FNAP), 262 to 282 (AIFM…TVAV), 288 to 308 (IVLA…IIQV), and 337 to 357 (QVVI…LSTL).

The protein belongs to the glycosyltransferase 4 family. MraY subfamily. Mg(2+) is required as a cofactor.

Its subcellular location is the cell inner membrane. The catalysed reaction is UDP-N-acetyl-alpha-D-muramoyl-L-alanyl-gamma-D-glutamyl-meso-2,6-diaminopimeloyl-D-alanyl-D-alanine + di-trans,octa-cis-undecaprenyl phosphate = di-trans,octa-cis-undecaprenyl diphospho-N-acetyl-alpha-D-muramoyl-L-alanyl-D-glutamyl-meso-2,6-diaminopimeloyl-D-alanyl-D-alanine + UMP. Its pathway is cell wall biogenesis; peptidoglycan biosynthesis. In terms of biological role, catalyzes the initial step of the lipid cycle reactions in the biosynthesis of the cell wall peptidoglycan: transfers peptidoglycan precursor phospho-MurNAc-pentapeptide from UDP-MurNAc-pentapeptide onto the lipid carrier undecaprenyl phosphate, yielding undecaprenyl-pyrophosphoryl-MurNAc-pentapeptide, known as lipid I. In Brucella anthropi (strain ATCC 49188 / DSM 6882 / CCUG 24695 / JCM 21032 / LMG 3331 / NBRC 15819 / NCTC 12168 / Alc 37) (Ochrobactrum anthropi), this protein is Phospho-N-acetylmuramoyl-pentapeptide-transferase.